Reading from the N-terminus, the 1210-residue chain is Adenine-specific methyltransferase PglX (1210 aa).

The segment covering 1181–1194 (KQGEHGLTDDDLRG) has biased composition (basic and acidic residues). Residues 1181 to 1210 (KQGEHGLTDDDLRGWRPPAATRRRRAAAKQ) form a disordered region. Basic residues predominate over residues 1201–1210 (TRRRRAAAKQ).

Belongs to the methyltransferase superfamily. PglX adenine methyltransferase family.

It catalyses the reaction a 2'-deoxyadenosine in DNA + S-adenosyl-L-methionine = an N(6)-methyl-2'-deoxyadenosine in DNA + S-adenosyl-L-homocysteine + H(+). In terms of biological role, BREX systems (bacteriophage exclusion) provide immunity against bacteriophage. Part of a type 2 BREX system. Probably a DNA methyltransferase, it methylates phage DNA in vitro in an S-adenosyl-L-methionine-dependent manner. Previously called the phage growth limitation (Pgl) system, it confers protection against bacteriophage phiC31. The bacteria allows one cycle of phage infection, but subsequent cycles are impaired, protecting the original bacterial colony. The system undergoes high rates (10(-3) to 10(-4)) of phase reversion, i.e. loss and regain of phiC31 resistance. When the pglW-pglX-pglY-pglZ genes are transformed into a susceptible S.lividans (strain 1326) they confer resistance to infection by phage phiC31 and phiBT1; all 4 genes are necessary. Functionally, probably a toxic component of a type II toxin-antitoxin (TA) system. The toxic activity is inhibited by its cognate antitoxin PglZ. Its function is as follows. May be a subtypes G and alpha restriction enzyme that recognizes and cleaves an unknown sequence. Methylates an adenine residue in the same sequence. This is Adenine-specific methyltransferase PglX from Streptomyces coelicolor (strain ATCC BAA-471 / A3(2) / M145).